The following is a 167-amino-acid chain: Urease accessory protein UreE (167 aa).

Belongs to the UreE family.

The protein localises to the cytoplasm. In terms of biological role, involved in urease metallocenter assembly. Binds nickel. Probably functions as a nickel donor during metallocenter assembly. This Pseudomonas aeruginosa (strain LESB58) protein is Urease accessory protein UreE.